The chain runs to 116 residues: Non-specific lipid-transfer protein 1 (116 aa).

The first 25 residues, 1–25, serve as a signal peptide directing secretion; the sequence is MARAQLVLVALVAALLLAAPHAAVA. Intrachain disulfides connect Cys28/Cys75, Cys38/Cys52, Cys53/Cys98, and Cys73/Cys112.

It belongs to the plant LTP family. In terms of tissue distribution, aleurone (external part) of the seeds.

Its function is as follows. Plant non-specific lipid-transfer proteins transfer phospholipids as well as galactolipids across membranes. May play a role in wax or cutin deposition in the cell walls of expanding epidermal cells and certain secretory tissues. The sequence is that of Non-specific lipid-transfer protein 1 (LTP) from Oryza sativa subsp. indica (Rice).